Consider the following 365-residue polypeptide: MVYVSNKYLTMSEMKVNAQYILNYLSNNGWTKQAICGMLGNMQSESTINPGLWQNLDEGNTSLGFGLVQWTPASNYINWANNQGIPYKNMDSELKRIIWEVNNNAQWNNLRDMTFKEYIKSTKTPRELAMIFLASYERPANPNQPVRGDQAEYWYKNLSGGGGGGLQLAQFPMDIINITQGENGSFSHKGTLCIDFVGKTEKYPYYAPCDCTCVWRGDASAYLAWTSDKEVMCADGSVRYITWVNVHESPLPFDVGKKLKKGDLMGHTGIGGNVTGDHWHFNVIDGKEYQGWTKKPDSCLAGTELHIYDVFAVNNVEIINGNGYDWKTSDWQDGDGGDGGDDNENNKTKDLITLLLSDALHGWKA.

Residues 1 to 159 form a lysozyme-like glycosidase region; that stretch reads MVYVSNKYLT…QAEYWYKNLS (159 aa). Residue Glu-45 is the For lysozyme-like glycosidase activity of the active site. Substrate-binding positions include Glu-45, Thr-71, Gln-106, and 137 to 140; that span reads ERPA. The segment at 160 to 165 is linker; sequence GGGGGG. The tract at residues 166–365 is probable metalloendopeptidase; sequence LQLAQFPMDI…LSDALHGWKA (200 aa). Zn(2+) contacts are provided by His-188, Asp-195, and His-280.

In the N-terminal section; belongs to the glycosyl hydrolase 24 family. This sequence in the C-terminal section; belongs to the peptidase M23B family. Requires Zn(2+) as cofactor.

The protein resides in the virion. Its function is as follows. May serve as a plug to restrain the highly pressurized packaged genome and thus would be the first virion protein to contact the host cell wall, degrading the peptidoglycan layer and thereby facilitating viral genome entry into the host bacteria. Acts probably as a multifunctional enzyme that degrades N-acetylglucosamine polymers (in vitro) and cleaves the peptide cross-links of the host cell wall. Essential for the tail assembly. This Bacillus subtilis (Bacteriophage PZA) protein is Morphogenesis protein 1 (13).